Reading from the N-terminus, the 439-residue chain is MFFHGTSRVNGKGHLEIGGVDTVELANLYGTPLFVYDVALIRERAKDFKQAFADEGVQAQVAYASKAFSCIAMFQLAEELGLSLDVVSGGELYTAQQAGVSMERIHFHGNNKSRAEIEMAVEAGIGCFVVDNFYELDLLADICEQKRATANILLRITPGVEAHTHDYISTGQEDSKFGFDLVSGQATLAVKKALAVDSIHLLGVHSHIGSQIFETTGFVMAVEKIFEHLVTWREDHGFEPSVLNLGGGFGIRYIEGDTPRPVGDYVKEMIRAVKQQIAEHEMSMPEIWIEPGRSLVGDAGTTLYTIGSRKEIPNVRHYLSVDGGMSDNLRPALYQAEYEGALANRVNEQPVGMFSVAGKCCESGDMLIWDLPLPEANHEDILAVFCTGAYGYSMANNYNRIPRPPVVFVEDGDAQLVIQRERYEDLVRLDMPLVKKVKV.

K66 carries the post-translational modification N6-(pyridoxal phosphate)lysine. Pyridoxal 5'-phosphate-binding positions include G248 and 290–293 (EPGR). Substrate is bound by residues R293, R330, and Y334. The Proton donor role is filled by C361. E362 and Y390 together coordinate substrate. Y390 lines the pyridoxal 5'-phosphate pocket.

Belongs to the Orn/Lys/Arg decarboxylase class-II family. LysA subfamily. In terms of assembly, homodimer. Requires pyridoxal 5'-phosphate as cofactor.

It catalyses the reaction meso-2,6-diaminopimelate + H(+) = L-lysine + CO2. It participates in amino-acid biosynthesis; L-lysine biosynthesis via DAP pathway; L-lysine from DL-2,6-diaminopimelate: step 1/1. Functionally, specifically catalyzes the decarboxylation of meso-diaminopimelate (meso-DAP) to L-lysine. In Halalkalibacterium halodurans (strain ATCC BAA-125 / DSM 18197 / FERM 7344 / JCM 9153 / C-125) (Bacillus halodurans), this protein is Diaminopimelate decarboxylase.